A 262-amino-acid polypeptide reads, in one-letter code: MWITQEITPYLRKEYTIEAKLLDVRSEHNILEIFKSKDFGEIAMLNCQLLFKNFLHIESELLAHMGGCTKKELKEVLIVDGFDLELAHQLFKYDTRIDFVQADEKILDSFISFFPHFHEVKNNKNFTHAKQLLDLDIKKYDLILCLQEPDIHKIDGLKRMLKEDGVFISVAKHPLLEHVSMQNALKNLGDFFPITIPFVAPLRILSNKGYIYASFKTHPLKDLMTPKIEALKSVRYYNEDIHRAAFALPKNLQEVFKDNIKS.

A PABS domain is found at 1 to 249; the sequence is MWITQEITPY…DIHRAAFALP (249 aa). Asn-29 contributes to the S-methyl-5'-thioadenosine binding site. Asp-83 is a spermidine binding site. Residue Asp-155 is the Proton acceptor of the active site.

This sequence belongs to the spermidine/spermine synthase family. In terms of assembly, homodimer or homotetramer.

Its subcellular location is the cytoplasm. The enzyme catalyses S-adenosyl 3-(methylsulfanyl)propylamine + putrescine = S-methyl-5'-thioadenosine + spermidine + H(+). It participates in amine and polyamine biosynthesis; spermidine biosynthesis; spermidine from putrescine: step 1/1. Functionally, catalyzes the irreversible transfer of a propylamine group from the amino donor S-adenosylmethioninamine (decarboxy-AdoMet) to putrescine (1,4-diaminobutane) to yield spermidine. The protein is Polyamine aminopropyltransferase of Helicobacter pylori (strain P12).